A 582-amino-acid chain; its full sequence is Membrane protein insertase YidC (582 aa).

The next 4 membrane-spanning stretches (helical) occupy residues 4 to 24 (NTVL…YIQQ), 376 to 396 (IIPN…IIFF), 446 to 466 (ASGC…FGLF), and 542 to 562 (FMPL…LLFW).

It belongs to the OXA1/ALB3/YidC family. Type 1 subfamily. Interacts with the Sec translocase complex via SecD. Specifically interacts with transmembrane segments of nascent integral membrane proteins during membrane integration.

The protein localises to the cell inner membrane. In terms of biological role, required for the insertion and/or proper folding and/or complex formation of integral membrane proteins into the membrane. Involved in integration of membrane proteins that insert both dependently and independently of the Sec translocase complex, as well as at least some lipoproteins. Aids folding of multispanning membrane proteins. This chain is Membrane protein insertase YidC, found in Treponema denticola (strain ATCC 35405 / DSM 14222 / CIP 103919 / JCM 8153 / KCTC 15104).